The sequence spans 193 residues: Peptidyl-tRNA hydrolase (193 aa).

TRNA is bound at residue tyrosine 17. Histidine 22 acts as the Proton acceptor in catalysis. TRNA contacts are provided by tyrosine 68, asparagine 70, and asparagine 116.

The protein belongs to the PTH family. As to quaternary structure, monomer.

Its subcellular location is the cytoplasm. It catalyses the reaction an N-acyl-L-alpha-aminoacyl-tRNA + H2O = an N-acyl-L-amino acid + a tRNA + H(+). Functionally, hydrolyzes ribosome-free peptidyl-tRNAs (with 1 or more amino acids incorporated), which drop off the ribosome during protein synthesis, or as a result of ribosome stalling. In terms of biological role, catalyzes the release of premature peptidyl moieties from peptidyl-tRNA molecules trapped in stalled 50S ribosomal subunits, and thus maintains levels of free tRNAs and 50S ribosomes. This chain is Peptidyl-tRNA hydrolase, found in Acinetobacter baumannii (strain AB307-0294).